The chain runs to 208 residues: Small ribosomal subunit protein uS5 (208 aa).

The segment covering methionine 1–alanine 19 has biased composition (polar residues). The disordered stretch occupies residues methionine 1–glutamate 54. Composition is skewed to basic and acidic residues over residues glycine 25–arginine 37 and arginine 44–glutamate 54. Residues tryptophan 52 to valine 115 enclose the S5 DRBM domain.

It belongs to the universal ribosomal protein uS5 family. As to quaternary structure, part of the 30S ribosomal subunit. Contacts proteins S4 and S8.

With S4 and S12 plays an important role in translational accuracy. Its function is as follows. Located at the back of the 30S subunit body where it stabilizes the conformation of the head with respect to the body. The chain is Small ribosomal subunit protein uS5 from Prochlorococcus marinus (strain NATL1A).